Here is a 297-residue protein sequence, read N- to C-terminus: Aspartate carbamoyltransferase catalytic subunit (297 aa).

Residues arginine 49 and threonine 50 each coordinate carbamoyl phosphate. Lysine 77 lines the L-aspartate pocket. Carbamoyl phosphate-binding residues include arginine 99, histidine 129, and glutamine 132. The L-aspartate site is built by arginine 162 and arginine 215. Residues glycine 256 and proline 257 each coordinate carbamoyl phosphate.

Belongs to the aspartate/ornithine carbamoyltransferase superfamily. ATCase family. Heterododecamer (2C3:3R2) of six catalytic PyrB chains organized as two trimers (C3), and six regulatory PyrI chains organized as three dimers (R2).

The enzyme catalyses carbamoyl phosphate + L-aspartate = N-carbamoyl-L-aspartate + phosphate + H(+). It participates in pyrimidine metabolism; UMP biosynthesis via de novo pathway; (S)-dihydroorotate from bicarbonate: step 2/3. Its function is as follows. Catalyzes the condensation of carbamoyl phosphate and aspartate to form carbamoyl aspartate and inorganic phosphate, the committed step in the de novo pyrimidine nucleotide biosynthesis pathway. This is Aspartate carbamoyltransferase catalytic subunit from Legionella pneumophila subsp. pneumophila (strain Philadelphia 1 / ATCC 33152 / DSM 7513).